The primary structure comprises 305 residues: Non-homologous end joining protein Ku (305 aa).

Residues 16 to 202 (SLVSFGISLI…KVDPEQLSLA (187 aa)) form the Ku domain. Positions 263-305 (GEENGRKKSVSGAQHRSRRKSKGEQKLKVVRSGSSSDKRRKSA) are disordered.

It belongs to the prokaryotic Ku family. As to quaternary structure, homodimer. Interacts with LigD.

With LigD forms a non-homologous end joining (NHEJ) DNA repair enzyme, which repairs dsDNA breaks with reduced fidelity. Binds linear dsDNA with 5'- and 3'- overhangs but not closed circular dsDNA nor ssDNA. Recruits and stimulates the ligase activity of LigD. The chain is Non-homologous end joining protein Ku from Acidobacterium capsulatum (strain ATCC 51196 / DSM 11244 / BCRC 80197 / JCM 7670 / NBRC 15755 / NCIMB 13165 / 161).